A 225-amino-acid polypeptide reads, in one-letter code: 7-cyano-7-deazaguanine synthase (225 aa).

An ATP-binding site is contributed by 7 to 17 (LSGGMDSTTLL). Zn(2+)-binding residues include cysteine 183, cysteine 191, cysteine 194, and cysteine 197.

The protein belongs to the QueC family. In terms of assembly, homodimer. Zn(2+) serves as cofactor.

The catalysed reaction is 7-carboxy-7-deazaguanine + NH4(+) + ATP = 7-cyano-7-deazaguanine + ADP + phosphate + H2O + H(+). It participates in purine metabolism; 7-cyano-7-deazaguanine biosynthesis. Functionally, catalyzes the ATP-dependent conversion of 7-carboxy-7-deazaguanine (CDG) to 7-cyano-7-deazaguanine (preQ(0)). The chain is 7-cyano-7-deazaguanine synthase from Caldicellulosiruptor saccharolyticus (strain ATCC 43494 / DSM 8903 / Tp8T 6331).